The primary structure comprises 116 residues: Aspartate 1-decarboxylase (116 aa).

The Schiff-base intermediate with substrate; via pyruvic acid role is filled by S25. S25 bears the Pyruvic acid (Ser) mark. Residue T57 participates in substrate binding. Y58 functions as the Proton donor in the catalytic mechanism. A substrate-binding site is contributed by 73–75 (GAA).

This sequence belongs to the PanD family. In terms of assembly, heterooctamer of four alpha and four beta subunits. It depends on pyruvate as a cofactor. In terms of processing, is synthesized initially as an inactive proenzyme, which is activated by self-cleavage at a specific serine bond to produce a beta-subunit with a hydroxyl group at its C-terminus and an alpha-subunit with a pyruvoyl group at its N-terminus.

The protein localises to the cytoplasm. The enzyme catalyses L-aspartate + H(+) = beta-alanine + CO2. The protein operates within cofactor biosynthesis; (R)-pantothenate biosynthesis; beta-alanine from L-aspartate: step 1/1. Its function is as follows. Catalyzes the pyruvoyl-dependent decarboxylation of aspartate to produce beta-alanine. This is Aspartate 1-decarboxylase from Leptospira interrogans serogroup Icterohaemorrhagiae serovar Lai (strain 56601).